We begin with the raw amino-acid sequence, 236 residues long: 2,3,4,5-tetrahydropyridine-2,6-dicarboxylate N-acetyltransferase (236 aa).

The protein belongs to the transferase hexapeptide repeat family. DapH subfamily.

It carries out the reaction (S)-2,3,4,5-tetrahydrodipicolinate + acetyl-CoA + H2O = L-2-acetamido-6-oxoheptanedioate + CoA. Its pathway is amino-acid biosynthesis; L-lysine biosynthesis via DAP pathway; LL-2,6-diaminopimelate from (S)-tetrahydrodipicolinate (acetylase route): step 1/3. Its function is as follows. Catalyzes the transfer of an acetyl group from acetyl-CoA to tetrahydrodipicolinate. The sequence is that of 2,3,4,5-tetrahydropyridine-2,6-dicarboxylate N-acetyltransferase from Bacillus pumilus (strain SAFR-032).